Consider the following 617-residue polypeptide: RNA polymerase sigma factor RpoD (617 aa).

The disordered stretch occupies residues 192-222 (NITNDSNENEDENEDENEDEDENSIDPELAN). Positions 198–216 (NENEDENEDENEDEDENSI) are enriched in acidic residues. The tract at residues 383 to 453 (MVEANLRLVI…TRSIADQART (71 aa)) is sigma-70 factor domain-2. An Interaction with polymerase core subunit RpoC motif is present at residues 407–410 (DLIQ). The tract at residues 462–538 (ETINKLNRIS…DTTLELPLDS (77 aa)) is sigma-70 factor domain-3. The segment at 551 to 604 (VLSGLTAREAKVLRMRFGIDMNTDHTLEEVGKQFDVTRERIRQIEAKALRKLRH) is sigma-70 factor domain-4. The segment at residues 577–596 (LEEVGKQFDVTRERIRQIEA) is a DNA-binding region (H-T-H motif).

This sequence belongs to the sigma-70 factor family. RpoD/SigA subfamily. As to quaternary structure, interacts transiently with the RNA polymerase catalytic core.

It is found in the cytoplasm. Sigma factors are initiation factors that promote the attachment of RNA polymerase to specific initiation sites and are then released. This sigma factor is the primary sigma factor during exponential growth. This Buchnera aphidicola subsp. Schizaphis graminum (strain Sg) protein is RNA polymerase sigma factor RpoD.